We begin with the raw amino-acid sequence, 351 residues long: Thiamine-phosphate synthase (351 aa).

The segment at 1-129 (MVEPYSQKEQ…AKACKQMRYQ (129 aa)) is unknown. Residues 65-85 (LRAARDTPGDPGTELTHPQEE) form a disordered region. A thiamine-phosphate synthase region spans residues 130 to 351 (VYTLESNLMG…SQLNRIKPEL (222 aa)). 4-amino-2-methyl-5-(diphosphooxymethyl)pyrimidine-binding positions include 177 to 181 (QYRDK) and asparagine 209. Aspartate 210 and aspartate 229 together coordinate Mg(2+). Residue serine 248 participates in 4-amino-2-methyl-5-(diphosphooxymethyl)pyrimidine binding. 274-276 (TPT) provides a ligand contact to 2-[(2R,5Z)-2-carboxy-4-methylthiazol-5(2H)-ylidene]ethyl phosphate. 4-amino-2-methyl-5-(diphosphooxymethyl)pyrimidine is bound at residue lysine 277. Glycine 304 provides a ligand contact to 2-[(2R,5Z)-2-carboxy-4-methylthiazol-5(2H)-ylidene]ethyl phosphate.

The protein belongs to the thiamine-phosphate synthase family. Mg(2+) serves as cofactor.

It carries out the reaction 2-[(2R,5Z)-2-carboxy-4-methylthiazol-5(2H)-ylidene]ethyl phosphate + 4-amino-2-methyl-5-(diphosphooxymethyl)pyrimidine + 2 H(+) = thiamine phosphate + CO2 + diphosphate. It catalyses the reaction 2-(2-carboxy-4-methylthiazol-5-yl)ethyl phosphate + 4-amino-2-methyl-5-(diphosphooxymethyl)pyrimidine + 2 H(+) = thiamine phosphate + CO2 + diphosphate. The catalysed reaction is 4-methyl-5-(2-phosphooxyethyl)-thiazole + 4-amino-2-methyl-5-(diphosphooxymethyl)pyrimidine + H(+) = thiamine phosphate + diphosphate. It participates in cofactor biosynthesis; thiamine diphosphate biosynthesis; thiamine phosphate from 4-amino-2-methyl-5-diphosphomethylpyrimidine and 4-methyl-5-(2-phosphoethyl)-thiazole: step 1/1. Its function is as follows. Condenses 4-methyl-5-(beta-hydroxyethyl)thiazole monophosphate (THZ-P) and 2-methyl-4-amino-5-hydroxymethyl pyrimidine pyrophosphate (HMP-PP) to form thiamine monophosphate (TMP). This is Thiamine-phosphate synthase from Nostoc punctiforme (strain ATCC 29133 / PCC 73102).